A 60-amino-acid chain; its full sequence is LECNKLVPIAHKTCPAGKNLCYQMYMVSKSTIPVKRGCIDVCPKSSLLVKYVCCNTDRCN.

Disulfide bonds link Cys-3/Cys-21, Cys-14/Cys-38, Cys-42/Cys-53, and Cys-54/Cys-59.

The protein belongs to the three-finger toxin family. Short-chain subfamily. Type IA cytotoxin sub-subfamily. In terms of assembly, monomer in solution; Homodimer and oligomer in the presence of negatively charged lipids forming a pore with a size ranging between 20 and 30 Angstroms. Expressed by the venom gland.

The protein resides in the secreted. The protein localises to the target cell membrane. In terms of biological role, shows cytolytic activity on many different cells by forming pore in lipid membranes. In vivo, increases heart rate or kills the animal by cardiac arrest. In addition, it binds to heparin with high affinity, interacts with Kv channel-interacting protein 1 (KCNIP1) in a calcium-independent manner, and binds to integrin alpha-V/beta-3 (ITGAV/ITGB3) with moderate affinity. In Naja melanoleuca (Forest cobra), this protein is Cytotoxin 1.